Reading from the N-terminus, the 327-residue chain is Fe-S cluster assembly protein DRE2 (327 aa).

Positions Met-1–Phe-14 are enriched in polar residues. Disordered stretches follow at residues Met-1 to Pro-20 and Asn-153 to Ala-179. An N-terminal SAM-like domain region spans residues Gly-17 to Val-144. Positions Pro-145–Leu-214 are linker. The segment covering Pro-164–Ala-179 has biased composition (low complexity). [2Fe-2S] cluster-binding residues include Cys-224, Cys-235, Cys-238, and Cys-240. Positions Cys-224–Cys-240 are fe-S binding site A. Residues Cys-290, Cys-293, Cys-301, and Cys-304 each coordinate [4Fe-4S] cluster. 2 consecutive short sequence motifs (cx2C motif) follow at residues Cys-290–Cys-293 and Cys-301–Cys-304. Residues Cys-290–Cys-304 form a fe-S binding site B region.

The protein belongs to the anamorsin family. In terms of assembly, monomer. Interacts with TAH18. Interacts with MIA40. It depends on [2Fe-2S] cluster as a cofactor. [4Fe-4S] cluster is required as a cofactor.

It localises to the cytoplasm. The protein localises to the mitochondrion intermembrane space. Its function is as follows. Component of the cytosolic iron-sulfur (Fe-S) protein assembly (CIA) machinery required for the maturation of extramitochondrial Fe-S proteins. Part of an electron transfer chain functioning in an early step of cytosolic Fe-S biogenesis, facilitating the de novo assembly of a [4Fe-4S] cluster on the scaffold complex CFD1-NBP35. Electrons are transferred to DRE2 from NADPH via the FAD- and FMN-containing protein TAH18. TAH18-DRE2 are also required for the assembly of the diferric tyrosyl radical cofactor of ribonucleotide reductase (RNR), probably by providing electrons for reduction during radical cofactor maturation in the catalytic small subunit RNR2. The protein is Fe-S cluster assembly protein DRE2 of Pyricularia oryzae (strain 70-15 / ATCC MYA-4617 / FGSC 8958) (Rice blast fungus).